Consider the following 1907-residue polypeptide: Receptor-type tyrosine-protein phosphatase S (1907 aa).

The N-terminal stretch at 1-29 is a signal peptide; that stretch reads MAPTWSPSVVSVVGPVGLFLVLLARGCLA. At 30–1257 the chain is on the extracellular side; it reads EEPPRFIREP…PQPIVDGEEG (1228 aa). Ig-like C2-type domains are found at residues 33-123, 135-224, and 232-314; these read PRFI…AKLT, PNID…ANLY, and PRFS…AQIT. Disulfide bonds link Cys54-Cys107 and Cys156-Cys207. Residues 68 to 72 are important for binding to glycosaminoglycan chains; that stretch reads KKGKK. N-linked (GlcNAc...) asparagine glycans are attached at residues Asn250 and Asn295. Cys253 and Cys298 are disulfide-bonded. Fibronectin type-III domains follow at residues 321 to 411, 416 to 510, 514 to 603, 608 to 705, 710 to 809, 810 to 906, 907 to 1008, and 1011 to 1095; these read APGT…TGEQ, APRN…TQQG, QPMN…TLQA, PPQD…TDED, PPRK…TKGA, VLGR…APRG, FPQI…LARD, and SPKN…TAFN. A compositionally biased stretch (low complexity) spans 691–700; sequence PGPESSPVVV. The disordered stretch occupies residues 691–711; sequence PGPESSPVVVRTDEDVPSAPP. Asn720 carries an N-linked (GlcNAc...) asparagine glycan. Asn916 carries an N-linked (GlcNAc...) asparagine glycan. A helical membrane pass occupies residues 1258–1278; it reads LIWVIGPVLAVVFIICIVIAI. Residues 1279-1907 are Cytoplasmic-facing; that stretch reads LLYKNKPDSK…YLGSFDHYAT (629 aa). Over residues 1286–1296 the composition is skewed to basic and acidic residues; sequence DSKRKDSEPRT. Residues 1286–1313 are disordered; that stretch reads DSKRKDSEPRTKCLLNNADLAPHHPKDP. Tyrosine-protein phosphatase domains are found at residues 1352–1607 and 1639–1898; these read LSQE…LLEA and MELE…ALEY. Substrate-binding positions include Asp1516, 1548 to 1554, and Gln1592; that span reads CSAGVGR. Cys1548 acts as the Phosphocysteine intermediate in catalysis. Catalysis depends on Cys1839, which acts as the Phosphocysteine intermediate.

This sequence belongs to the protein-tyrosine phosphatase family. Receptor class 2A subfamily. In terms of assembly, binding to large heparan sulfate proteoglycan structures promotes oligomerization. Binding to chondroitin sulfate proteoglycan does not lead to oligomerization. Interacts (via Ig-like domains) with NTRK3. Interacts (via Ig-like domains) with NTRK1, but does not form detectable complexes with NTRK2. Interacts with PPFIA1, PPFIA2 and PPFIA3. In terms of processing, a cleavage occurs, separating the extracellular domain from the transmembrane segment. This process called 'ectodomain shedding' is thought to be involved in receptor desensitization, signal transduction and/or membrane localization. As to expression, detected in brain cortex, cerebellum and thoracic spinal cord (at protein level). Detected in motor cortex and white matter of the spinal cord, but not in spinal cord gray matter. Isoform 1 and isoform 6 are predominantly expressed in the brain (cerebrum and cerebellum) and to a lesser extent in the heart and skeletal muscle. Also found in neuronal-derived cell lines. Detected in the ganglion cell layer of the retina and in glial cells along the optic nerve. Detected in bone marrow and spleen plasmacytoid dendritic cells.

It localises to the cell membrane. Its subcellular location is the cell projection. It is found in the axon. The protein resides in the perikaryon. The protein localises to the cytoplasmic vesicle. It localises to the secretory vesicle. Its subcellular location is the synaptic vesicle membrane. It is found in the synapse. The protein resides in the synaptosome. The protein localises to the postsynaptic density. It localises to the neuron projection. Its subcellular location is the growth cone. It catalyses the reaction O-phospho-L-tyrosyl-[protein] + H2O = L-tyrosyl-[protein] + phosphate. Cell surface receptor that binds to glycosaminoglycans, including chondroitin sulfate proteoglycans and heparan sulfate proteoglycans. Binding to chondroitin sulfate and heparan sulfate proteoglycans has opposite effects on PTPRS oligomerization and regulation of neurite outgrowth. Contributes to the inhibition of neurite and axonal outgrowth by chondroitin sulfate proteoglycans, also after nerve transection. Plays a role in stimulating neurite outgrowth in response to the heparan sulfate proteoglycan GPC2. Required for normal brain development, especially for normal development of the pituitary gland and the olfactory bulb. Functions as a tyrosine phosphatase. Mediates dephosphorylation of NTRK1, NTRK2 and NTRK3. Plays a role in down-regulation of signaling cascades that lead to the activation of Akt and MAP kinases. Down-regulates TLR9-mediated activation of NF-kappa-B, as well as production of TNF, interferon alpha and interferon beta. This is Receptor-type tyrosine-protein phosphatase S (Ptprs) from Mus musculus (Mouse).